The chain runs to 275 residues: Endolytic peptidoglycan transglycosylase RlpA (275 aa).

A signal peptide spans 1 to 22 (MQIKTITLKLSAVSLGALFFSG). Residue C23 is the site of N-palmitoyl cysteine attachment. The S-diacylglycerol cysteine moiety is linked to residue C23. The SPOR domain maps to 200–275 (IYEGGNFMVQ…AFAGAFVVRE (76 aa)).

Belongs to the RlpA family.

Its subcellular location is the cell membrane. Lytic transglycosylase with a strong preference for naked glycan strands that lack stem peptides. The chain is Endolytic peptidoglycan transglycosylase RlpA from Campylobacter jejuni subsp. jejuni serotype O:2 (strain ATCC 700819 / NCTC 11168).